A 475-amino-acid polypeptide reads, in one-letter code: Ankyrin repeat, SAM and basic leucine zipper domain-containing protein 1 (475 aa).

Positions 1-24 (MAGSLGNLVVAGGGESSDSEEDYW) are disordered. A phosphoserine mark is found at serine 16, serine 17, and serine 19. ANK repeat units follow at residues 44 to 73 (ERDE…SVES), 77 to 106 (FGWT…NASF), 109 to 146 (DQYT…VACR), 147 to 176 (KCMT…EINA), 180 to 209 (NGYT…NKTI), and 213 to 242 (DGKT…PLQG). Positions 273–336 (TAFGDLEVFL…LDAVKELQVE (64 aa)) constitute an SAM domain.

In terms of assembly, interacts with DDX4, PIWIL1, RANBP9 and TDRD1.

It is found in the cytoplasm. Its function is as follows. Plays a central role during spermatogenesis by repressing transposable elements and preventing their mobilization, which is essential for the germline integrity. Acts via the piRNA metabolic process, which mediates the repression of transposable elements during meiosis by forming complexes composed of piRNAs and Piwi proteins and governs the methylation and subsequent repression of transposons. Its association with pi-bodies suggests a participation in the primary piRNAs metabolic process. Required prior to the pachytene stage to facilitate the production of multiple types of piRNAs, including those associated with repeats involved in the regulation of retrotransposons. May act by mediating protein-protein interactions during germ cell maturation. This chain is Ankyrin repeat, SAM and basic leucine zipper domain-containing protein 1 (ASZ1), found in Notamacropus eugenii (Tammar wallaby).